Consider the following 447-residue polypeptide: Tubulin alpha-2 chain (447 aa).

GTP is bound by residues Gln-11, Glu-71, Gly-144, Thr-145, Thr-179, Asn-206, and Asn-228. Glu-71 contributes to the Mg(2+) binding site. Glu-254 is a catalytic residue.

The protein belongs to the tubulin family. As to quaternary structure, dimer of alpha and beta chains. A typical microtubule is a hollow water-filled tube with an outer diameter of 25 nm and an inner diameter of 15 nM. Alpha-beta heterodimers associate head-to-tail to form protofilaments running lengthwise along the microtubule wall with the beta-tubulin subunit facing the microtubule plus end conferring a structural polarity. Microtubules usually have 13 protofilaments but different protofilament numbers can be found in some organisms and specialized cells. It depends on Mg(2+) as a cofactor. In terms of processing, undergoes a tyrosination/detyrosination cycle, the cyclic removal and re-addition of a C-terminal tyrosine residue by the enzymes tubulin tyrosine carboxypeptidase (TTCP) and tubulin tyrosine ligase (TTL), respectively.

Its subcellular location is the cytoplasm. It localises to the cytoskeleton. The catalysed reaction is GTP + H2O = GDP + phosphate + H(+). Functionally, tubulin is the major constituent of microtubules, a cylinder consisting of laterally associated linear protofilaments composed of alpha- and beta-tubulin heterodimers. Microtubules grow by the addition of GTP-tubulin dimers to the microtubule end, where a stabilizing cap forms. Below the cap, tubulin dimers are in GDP-bound state, owing to GTPase activity of alpha-tubulin. This chain is Tubulin alpha-2 chain (TUBA2), found in Eleusine indica (Goosegrass).